A 426-amino-acid chain; its full sequence is Glutamate-1-semialdehyde 2,1-aminomutase (426 aa).

K263 carries the N6-(pyridoxal phosphate)lysine modification.

This sequence belongs to the class-III pyridoxal-phosphate-dependent aminotransferase family. HemL subfamily. As to quaternary structure, homodimer. Pyridoxal 5'-phosphate is required as a cofactor.

The protein localises to the cytoplasm. The catalysed reaction is (S)-4-amino-5-oxopentanoate = 5-aminolevulinate. It participates in porphyrin-containing compound metabolism; protoporphyrin-IX biosynthesis; 5-aminolevulinate from L-glutamyl-tRNA(Glu): step 2/2. The sequence is that of Glutamate-1-semialdehyde 2,1-aminomutase from Dichelobacter nodosus (strain VCS1703A).